A 1463-amino-acid polypeptide reads, in one-letter code: MITSSKKIVSAMLSTSLWIGVASAAYAETTNVEAEGYSTIGGTYQDGNPQPINIYSVNGVQAINFVNRGDFAEYDVSVSTAGEYSIEYLIGTSIASGSAVEISVLVDGNWQSAGSTNVPLGQWDNFQALAANNNISLAQGTNRIKITGAGTHDWQWNLDAFSLTLVTPENPDNPDNPDNPDDGNTGQPGTPFTIEMEAFDATGSDDPRAQGMVIGERGYPEDKHTVVDSNQTTDWVDYNINFPVSGNYRIEMLASGQTSHATAILFVDNVQINEVAVDTGNQAVFLDFELTDSTYISAGAHTIRVQSGSQINEFSWMWFGDALTFTPLDGGSTDGDADNDGVLDSVDTCPNTPAGAQVDANGCEIIVDNDTDNDGVDNSIDQCPNTPAGAQVDANGCEIVAVVDADNDGVEDSLDMCPNTPAGAPVNGQGCADSQLDADNDGVSDDIDQCPSTPAGSVVDGTGCIVVTPPADSDNDGVVDTLDMCPNTAAGLTVDSQGCALSQLDSDNDGVTDDIDQCANTPSGETANATGCSSSQEGGGTDPDTPQPGLLYGELAGAMNVSDTNPNWERTTDLLQTEDSVKGNTTEVYTGFIYDADGHISFYEHIDDSVRLYIDGVLVLSNDSWEASSQTTDLNLTPGTHEIELRIGNADGGSGAVDGIGFGIDVDGGTNFVHPSTLSESIFTSVGEETGNPDLEQEGDIIVELESFVFTSTNGRVGSDSVEGFSPTATGVNWVTNGDYGDYMVTFEEPGTYGAYITISAANDGSYGARVDVDGWPVAWGYFGGTGSWDVSSENLLYGGTFVVEQAGEKVVRVEAIGGSDWQWSGDRVRFTRLGDVTAIPSPIYNPDDHFVAEIQGPQTDVTYLKKPVEIPANKKVLKSDVWYTYPQNRELEGYDNFGATGAFWGHPPEHDFYDDTVIMDWAVDAVYAFQAEGYEYTARGEFDWGYGWFTEYTTNPQPHYVRTLDDRNVRMTFMGYLSHDGYNNNWLSNHSPAFVPFMKSQVDQILKANPDKLMFDTQTNSTRSTDMRDFGGDFSPYAMENFRVWLSKKYSTGELAALGINDINSFDYGDFLRAQGVTHTSWSNAGDTLSGNIPLQEDYIYFNRDVWNQKFAEVLDYIRQQQPDIEIGASTHLFESRGYVFNENLTFLSGELNLGARTTISELPTNILVHLKGAQAVDKTLVYFPYPWEFDELRLQDAPRFGRGWVAQAYAYGGLFSIPANVWVGGEVWTWSPGADNYRDIYLFVRAQADLLDDYTSYSKVGLVHAMYSSMKAGFIDGGNQIQSSTKLLTEGNINFDLLVFGDEGYPVVPRPEDFDKFDHIFFDGDEQYLTAEQQALLDQQGDKVRHIGQRGTVSGIEITVSISGTESNETVSAVSRIHETDAAAPYVVHLVNRPFAGGVTPTLNNVEVAIPQSYFPEVVTGATLHLPDGTSTSLTLSTNADGDVVLPVNNLEVWGILELAH.

The first 27 residues, 1–27, serve as a signal peptide directing secretion; sequence MITSSKKIVSAMLSTSLWIGVASAAYA. Residues 28–684 constitute a propeptide that is removed on maturation; sequence ETTNVEAEGY…PSTLSESIFT (657 aa). 2 disordered regions span residues 166–191 and 512–549; these read VTPE…PGTP and TDDI…PQPG. The segment covering 518–536 has biased composition (polar residues); the sequence is CANTPSGETANATGCSSSQ. One can recognise a PA14 domain in the interval 534 to 677; it reads SSQEGGGTDP…GGTNFVHPST (144 aa). The CBM6 domain maps to 701–832; that stretch reads IIVELESFVF…QWSGDRVRFT (132 aa).

It belongs to the glycosyl hydrolase 96 family. Monomer. Ca(2+) serves as cofactor.

It catalyses the reaction Endohydrolysis of 1,3-alpha-L-galactosidic linkages in agarose, yielding agarotetraose as the major product.. Functionally, alpha-agarase. Hydrolyzes agarose, agarohexaose, neoagarohexaose and porphyran. Hydrolysis of porphyran by this enzyme improves its antioxidant activity. Does not hydrolyze kappa-carrageenan, iota-carrageenen or lambda-carrageenan. This is Alpha-agarase from Thalassotalea agarivorans (Thalassomonas agarivorans).